The following is a 472-amino-acid chain: Siroheme synthase 1 (472 aa).

The tract at residues 1 to 203 (MDYLPLFADL…GQLAQAEEEL (203 aa)) is precorrin-2 dehydrogenase /sirohydrochlorin ferrochelatase. NAD(+) is bound by residues 22–23 (EV) and 43–44 (QT). At S128 the chain carries Phosphoserine. Residues 215–472 (GEVALVGAGP…AISPSVVNLA (258 aa)) are uroporphyrinogen-III C-methyltransferase. Residue P224 coordinates S-adenosyl-L-methionine. The active-site Proton acceptor is D247. Residue K269 is the Proton donor of the active site. S-adenosyl-L-methionine-binding positions include 300–302 (GGD), I305, 330–331 (TA), M382, and G411.

The protein in the N-terminal section; belongs to the precorrin-2 dehydrogenase / sirohydrochlorin ferrochelatase family. This sequence in the C-terminal section; belongs to the precorrin methyltransferase family.

The enzyme catalyses uroporphyrinogen III + 2 S-adenosyl-L-methionine = precorrin-2 + 2 S-adenosyl-L-homocysteine + H(+). It catalyses the reaction precorrin-2 + NAD(+) = sirohydrochlorin + NADH + 2 H(+). It carries out the reaction siroheme + 2 H(+) = sirohydrochlorin + Fe(2+). The protein operates within cofactor biosynthesis; adenosylcobalamin biosynthesis; precorrin-2 from uroporphyrinogen III: step 1/1. Its pathway is cofactor biosynthesis; adenosylcobalamin biosynthesis; sirohydrochlorin from precorrin-2: step 1/1. It participates in porphyrin-containing compound metabolism; siroheme biosynthesis; precorrin-2 from uroporphyrinogen III: step 1/1. It functions in the pathway porphyrin-containing compound metabolism; siroheme biosynthesis; siroheme from sirohydrochlorin: step 1/1. The protein operates within porphyrin-containing compound metabolism; siroheme biosynthesis; sirohydrochlorin from precorrin-2: step 1/1. Functionally, multifunctional enzyme that catalyzes the SAM-dependent methylations of uroporphyrinogen III at position C-2 and C-7 to form precorrin-2 via precorrin-1. Then it catalyzes the NAD-dependent ring dehydrogenation of precorrin-2 to yield sirohydrochlorin. Finally, it catalyzes the ferrochelation of sirohydrochlorin to yield siroheme. The sequence is that of Siroheme synthase 1 from Yersinia enterocolitica serotype O:8 / biotype 1B (strain NCTC 13174 / 8081).